A 26-amino-acid chain; its full sequence is Toxin b subunit alpha (26 aa).

As to quaternary structure, toxin b is a heterodimer composed of toxin alpha and toxin beta. Expressed by the venom gland.

It is found in the secreted. Its function is as follows. Binds to sodium channels (Nav) and affects the channel activation process. In Androctonus crassicauda (Arabian fat-tailed scorpion), this protein is Toxin b subunit alpha.